We begin with the raw amino-acid sequence, 345 residues long: MNTEASQDQTVTETPGVRLRQARESLGLTQQTVAERLCLKVSTIRDIEEDNAQANLASTFHRGYIRSYAKLVHLPEDELLPILEKQAPVRAAKVAPMQSFSLGKKHKKRDGWLMSFTWLIVLVVLGLTGAWWWQNHQAQQAEIANMVDQSSAQLSQNGGQPVPLTDDNSDAIAPTDAPAPVANGQPVPLTNHSGSAITNSATTSSVPKTTSTEPVDTANTNTTMHQEGAASAAVSPSQVPQPGMPTGQPPLPTADAGVSGSASSVGALVMNFTADCWLQVVDATGKTLFSGIQKGGAVLNLAGKAPYKLTIGAPGALTISYQGNPVDLSKFIKANRVARLTVGVE.

The Cytoplasmic segment spans residues 1 to 111 (MNTEASQDQT…LGKKHKKRDG (111 aa)). The HTH cro/C1-type domain occupies 19–79 (LRQARESLGL…KLVHLPEDEL (61 aa)). The segment at residues 30 to 49 (QQTVAERLCLKVSTIRDIEE) is a DNA-binding region (H-T-H motif). The chain crosses the membrane as a helical; Signal-anchor for type II membrane protein span at residues 112 to 132 (WLMSFTWLIVLVVLGLTGAWW). Topologically, residues 133–345 (WQNHQAQQAE…RVARLTVGVE (213 aa)) are periplasmic. The interval 151-260 (SAQLSQNGGQ…LPTADAGVSG (110 aa)) is disordered. Positions 188–225 (PLTNHSGSAITNSATTSSVPKTTSTEPVDTANTNTTMH) are enriched in polar residues. Low complexity predominate over residues 229 to 241 (AASAAVSPSQVPQ).

It belongs to the RodZ family.

The protein resides in the cell inner membrane. In terms of biological role, cytoskeletal protein that is involved in cell-shape control through regulation of the length of the long axis. This chain is Cytoskeleton protein RodZ, found in Yersinia pestis (strain Pestoides F).